The primary structure comprises 819 residues: DNA topoisomerase 4 subunit A (819 aa).

One can recognise a Topo IIA-type catalytic domain in the interval 30 to 496; it reads LPDIRDGLKP…QIIEIDTASL (467 aa). Y118 (O-(5'-phospho-DNA)-tyrosine intermediate) is an active-site residue.

The protein belongs to the type II topoisomerase GyrA/ParC subunit family. ParC type 2 subfamily. Heterotetramer composed of ParC and ParE.

It is found in the cell membrane. It catalyses the reaction ATP-dependent breakage, passage and rejoining of double-stranded DNA.. Topoisomerase IV is essential for chromosome segregation. It relaxes supercoiled DNA. Performs the decatenation events required during the replication of a circular DNA molecule. The chain is DNA topoisomerase 4 subunit A from Streptococcus pyogenes serotype M18 (strain MGAS8232).